The following is a 339-amino-acid chain: Anthranilate phosphoribosyltransferase (339 aa).

5-phospho-alpha-D-ribose 1-diphosphate-binding positions include glycine 79, 82-83 (GD), threonine 87, 89-92 (NVST), 107-115 (KHGNRAVSS), and serine 119. Glycine 79 is a binding site for anthranilate. Serine 91 provides a ligand contact to Mg(2+). Anthranilate is bound at residue asparagine 110. Position 165 (arginine 165) interacts with anthranilate. Aspartate 224 and glutamate 225 together coordinate Mg(2+).

The protein belongs to the anthranilate phosphoribosyltransferase family. In terms of assembly, homodimer. It depends on Mg(2+) as a cofactor.

The catalysed reaction is N-(5-phospho-beta-D-ribosyl)anthranilate + diphosphate = 5-phospho-alpha-D-ribose 1-diphosphate + anthranilate. The protein operates within amino-acid biosynthesis; L-tryptophan biosynthesis; L-tryptophan from chorismate: step 2/5. Its function is as follows. Catalyzes the transfer of the phosphoribosyl group of 5-phosphorylribose-1-pyrophosphate (PRPP) to anthranilate to yield N-(5'-phosphoribosyl)-anthranilate (PRA). The chain is Anthranilate phosphoribosyltransferase from Geobacillus stearothermophilus (Bacillus stearothermophilus).